The sequence spans 80 residues: Acyl carrier protein (80 aa).

Residues 4-79 (EAILEKVRSI…DAVKYIEDKQ (76 aa)) enclose the Carrier domain. O-(pantetheine 4'-phosphoryl)serine is present on Ser39.

The protein belongs to the acyl carrier protein (ACP) family. 4'-phosphopantetheine is transferred from CoA to a specific serine of apo-ACP by AcpS. This modification is essential for activity because fatty acids are bound in thioester linkage to the sulfhydryl of the prosthetic group.

The protein resides in the cytoplasm. It participates in lipid metabolism; fatty acid biosynthesis. Functionally, carrier of the growing fatty acid chain in fatty acid biosynthesis. The polypeptide is Acyl carrier protein (Synechococcus sp. (strain CC9902)).